A 203-amino-acid chain; its full sequence is Outer-membrane lipoprotein carrier protein (203 aa).

A signal peptide spans 1–21; sequence MKKLIISCCLLATFSAAGAWA. Residues 174 to 203 form a disordered region; sequence ALKSQQSGPISADKFKFRPPKGVTVDDQRQ.

Belongs to the LolA family. As to quaternary structure, monomer.

It localises to the periplasm. Functionally, participates in the translocation of lipoproteins from the inner membrane to the outer membrane. Only forms a complex with a lipoprotein if the residue after the N-terminal Cys is not an aspartate (The Asp acts as a targeting signal to indicate that the lipoprotein should stay in the inner membrane). The sequence is that of Outer-membrane lipoprotein carrier protein from Erwinia tasmaniensis (strain DSM 17950 / CFBP 7177 / CIP 109463 / NCPPB 4357 / Et1/99).